The sequence spans 342 residues: L-threonine 3-dehydrogenase (342 aa).

Residue cysteine 38 participates in Zn(2+) binding. Catalysis depends on charge relay system residues threonine 40 and histidine 43. 6 residues coordinate Zn(2+): histidine 63, glutamate 64, cysteine 93, cysteine 96, cysteine 99, and cysteine 107. NAD(+) is bound by residues valine 175, aspartate 195, arginine 200, 262–264, and 286–287; these read LGI and IY.

This sequence belongs to the zinc-containing alcohol dehydrogenase family. Homotetramer. The cofactor is Zn(2+).

The protein resides in the cytoplasm. The enzyme catalyses L-threonine + NAD(+) = (2S)-2-amino-3-oxobutanoate + NADH + H(+). It functions in the pathway amino-acid degradation; L-threonine degradation via oxydo-reductase pathway; glycine from L-threonine: step 1/2. In terms of biological role, catalyzes the NAD(+)-dependent oxidation of L-threonine to 2-amino-3-ketobutyrate. The sequence is that of L-threonine 3-dehydrogenase from Coxiella burnetii (strain Dugway 5J108-111).